Here is a 504-residue protein sequence, read N- to C-terminus: MVENNIILEMNGISKNFPGVKALDGVDLKVKKGTVHALMGENGAGKSTLMKCLFGIYRSDDGEIVLGGKKVQFKNAKDALENGISMIHQELHPVPHRSVMENVWLGRFPVKKVFGLGIVDHKKMYEDTKDLLGKLKMNIDPNTLVSKLSVSQVQGLEIAKAVSYNSKIIVMDEPTSSLTENEVTHLFNIISDLKNQGVAIIYISHKMEEILKIADEVTIMRDGKYIGTWEAEGLTTDLIISKMVGRDLTNRFPPKENTPGEVIMKVENLTSANNKSFKDISFELRKGEILGIGGLVGAQRTELVESIFGLRKIETGKIYINGQEVKIKSPINSKKYGIALLTEERRSTGIFPVLTVGDNTIIAGLDKYIDLKFVVNQKRGMKDIKNSIEKLNIRTPSHATQIKNLSGGNQQKVIFSRWLLTEPDVLIMDEPTRGIDVGAKYEIYSIISDLSKMGKSIIMISSEMPELIGMSDRIMIMCDGRLSGIIEGEEATQEEIMKYATRFI.

2 ABC transporter domains span residues 8-247 (LEMN…VGRD) and 258-504 (TPGE…TRFI). 40-47 (GENGAGKS) contributes to the ATP binding site.

This sequence belongs to the ABC transporter superfamily. Galactose/methyl galactoside importer (TC 3.A.1.2.3) family. As to quaternary structure, the complex is composed of one ATP-binding protein (MglA), two transmembrane proteins (MglC) and a solute-binding protein (MglB).

It localises to the cell membrane. The catalysed reaction is D-galactose(out) + ATP + H2O = D-galactose(in) + ADP + phosphate + H(+). The enzyme catalyses methyl beta-D-galactoside(out) + ATP + H2O = methyl beta-D-galactoside(in) + ADP + phosphate + H(+). Part of the ABC transporter complex MglABC involved in galactose/methyl galactoside import. Responsible for energy coupling to the transport system. This Clostridium tetani (strain Massachusetts / E88) protein is Galactose/methyl galactoside import ATP-binding protein MglA.